Here is a 150-residue protein sequence, read N- to C-terminus: MKLSDIDKGTYAAVKFDDSTLDMFQALQQIMELFNPVPRDKLHSTICFSRVKIPYIPLTEKMPIGSTHKLEVFEHNGKRALVVLLDSPYLESRHEYANILGATFDFPTYNPHVTLAYDIGAMEIPKHGVTGNPVVITHEYTEDLDLNWKP.

Tyr11 is a binding site for 3',3'-cGAMP. Tyr11 lines the 3',3'-cUAMP pocket. Active-site residues include His43 and Thr45. Phe73 lines the 3',3'-cGAMP pocket. Phe73 is a binding site for 3',3'-cUAMP. Active-site residues include His112 and Thr114. 3',3'-cGAMP contacts are provided by Glu142 and Trp148. 3',3'-cUAMP contacts are provided by Glu142 and Trp148.

Belongs to the anti-CBASS protein Acb1 family.

The enzyme catalyses 3',3'-cUAMP + H2O = U[3'-5']pAp[3'] + H(+). It carries out the reaction 3',3',3'-c-tri-AMP + H2O = A[3'-5']pA[3'-5']pAp[3'] + H(+). The catalysed reaction is 3',3',3'-cAAG + H2O = G[3'-5']pA[3'-5']pAp[3'] + H(+). It catalyses the reaction 3',3',3'-cAAG + H2O = A[3'-5']pG[3'-5']pAp[3'] + H(+). The enzyme catalyses 3',3'-cGAMP + H2O = G[3'-5']pAp[3'] + H(+). Its function is as follows. Counteracts the host CBASS antiviral defense system. Phosphodiesterase that enables metal-independent hydrolysis of the host cyclic di- and trinucleotide CBASS signals such as 3'3'-cGAMP, 3'3'cUA, and 3'3'3'-cAAA. Does not cleave cGG or cA4. Besides evasion of the CBASS system, might also enable evasion of the type III CRISPR systems that use cA3 signals. The protein is Anti-CBASS protein Acb1 of Acinetobacter sp. (Acinetobacter phage 42).